The following is a 194-amino-acid chain: WASH complex subunit 3 (194 aa).

N-acetylmethionine is present on M1. A coiled-coil region spans residues 46–74 (TVCEEKLADLSLRIQQIETTLNILDAKLS). Disordered regions lie at residues 93–121 (SVTN…QESE) and 159–194 (EGLD…SFSD). The span at 103–121 (TSEQPQQNSTQDSGLQESE) shows a compositional bias: polar residues.

This sequence belongs to the CCDC53 family. As to quaternary structure, component of the WASH core complex also described as WASH regulatory complex (SHRC) composed of WASH (WASHC1, WASH2P or WASH3P), WASHC2 (WASHC2A or WASHC2C), WASHC3, WASHC4 and WASHC5. The WASH core complex associates via WASHC2 with the F-actin-capping protein dimer (formed by CAPZA1, CAPZA2 or CAPZA3 and CAPZB) in a transient or substoichiometric manner which was initially described as WASH complex.

The protein localises to the early endosome. In terms of biological role, acts as a component of the WASH core complex that functions as a nucleation-promoting factor (NPF) at the surface of endosomes, where it recruits and activates the Arp2/3 complex to induce actin polymerization, playing a key role in the fission of tubules that serve as transport intermediates during endosome sorting. This Homo sapiens (Human) protein is WASH complex subunit 3.